Consider the following 218-residue polypeptide: MSETLIKICGLTDEDGVDAAVEAGVDMIGFVFFEPSPRDLDPARAAELLDGVPHAEEGGPLRVGLFVDADDATLEAVFAGVRLDVLQFHGEESPERVEWARLEYGLPVIKALPIASAADLERAALYAEVADYLLFDARPPAGADRPGGHAQTFDWSLLAGFSAPVPWLLAGGLTPENVAEAIKVSGATAVDVSSGVETVRGIKDPERVSAFVKAVREG.

This sequence belongs to the TrpF family.

The enzyme catalyses N-(5-phospho-beta-D-ribosyl)anthranilate = 1-(2-carboxyphenylamino)-1-deoxy-D-ribulose 5-phosphate. The protein operates within amino-acid biosynthesis; L-tryptophan biosynthesis; L-tryptophan from chorismate: step 3/5. The sequence is that of N-(5'-phosphoribosyl)anthranilate isomerase from Rhodospirillum rubrum (strain ATCC 11170 / ATH 1.1.1 / DSM 467 / LMG 4362 / NCIMB 8255 / S1).